The sequence spans 588 residues: Synaptotagmin-3 (588 aa).

Over 1 to 54 (MSGDYEDDLCRRALILVSDLCARIRDADTNDRCQEFNELRIRGYPRGPDADISV) the chain is Vesicular. The segment at 10–34 (CRRALILVSDLCARIRDADTNDRCQ) is cysteine motif. The chain crosses the membrane as a helical span at residues 55-75 (SLLSVIVTFCGIVLLGVSLFV). Residues 76-588 (SWKLCWVPWR…KGLSEKENSE (513 aa)) lie on the Cytoplasmic side of the membrane. Disordered regions lie at residues 129–161 (GGPH…PEPS), 183–222 (PSQT…VTSL), and 238–257 (QTLT…ALPL). Over residues 183–205 (PSQTSPELPSEGGTGSGLLLLPP) the composition is skewed to low complexity. The span at 213 to 222 (AQSHQQVTSL) shows a compositional bias: polar residues. Position 286 is an omega-N-methylarginine (R286). C2 domains follow at residues 297-418 (PCGR…PLWR) and 429-563 (DLGE…EHWH). The Ca(2+) site is built by D328, D334, D386, F387, D388, S391, D394, D460, D466, D520, and D522.

This sequence belongs to the synaptotagmin family. In terms of assembly, homodimer; disulfide-linked via the cysteine motif. Can also form heterodimers with SYT6, SYT9 and SYT10. Requires Ca(2+) as cofactor. As to expression, brain, various endocrine tissues and hormone-secreting clonal cells.

The protein localises to the cell membrane. It localises to the cytoplasmic vesicle. Its subcellular location is the secretory vesicle membrane. Functionally, ca(2+) sensor involved in Ca(2+)-dependent exocytosis of secretory vesicles through Ca(2+) and phospholipid binding to the C2 domain. Ca(2+) induces binding of the C2-domains to phospholipid membranes and to assembled SNARE-complexes; both actions contribute to triggering exocytosis. Plays a role in dendrite formation by melanocytes. The protein is Synaptotagmin-3 (Syt3) of Rattus norvegicus (Rat).